The following is a 345-amino-acid chain: NADPH dehydrogenase (345 aa).

FMN is bound at residue 23–26 (SPMC). Residue Tyr28 participates in substrate binding. Positions 60 and 102 each coordinate FMN. A substrate-binding site is contributed by 164-167 (HGAH). Residues Arg215 and 307 to 308 (GR) each bind FMN.

Belongs to the NADH:flavin oxidoreductase/NADH oxidase family. NamA subfamily. Homotetramer. It depends on FMN as a cofactor.

The catalysed reaction is A + NADPH + H(+) = AH2 + NADP(+). Its function is as follows. Catalyzes the reduction of the double bond of an array of alpha,beta-unsaturated aldehydes and ketones. It also reduces the nitro group of nitroester and nitroaromatic compounds. It could have a role in detoxification processes. In Bacillus cereus (strain Q1), this protein is NADPH dehydrogenase.